The chain runs to 267 residues: MNIRQIINSKGKRKLSMVTAYSYFQAKMAEEAGIDMILVGDSYGNTILGYENTLPVTMEEMLIAVSAVRRGAPNTFVIADMPFLSYQVSEEKAIENAGRFIKVGANAVKLEGGAEVAGLVKKLVDFGIPVMGHLGLTPQHVNVIGGYRVQGKTDKSVKRLLEGVKLLEEAGVFAIVLELVVEGIAKKLTEETSVPTIGIGAGRYCDGQVLVWHDLLGINTEFSPRFVKRYANLRKDIVDALKKYNEEVKNGEFPGPENVFESGGFDE.

Residues D41 and D80 each coordinate Mg(2+). 3-methyl-2-oxobutanoate-binding positions include D41–S42, D80, and K109. E111 is a binding site for Mg(2+). The active-site Proton acceptor is E178.

Belongs to the PanB family. Homodecamer; pentamer of dimers. Mg(2+) is required as a cofactor.

It is found in the cytoplasm. The enzyme catalyses 3-methyl-2-oxobutanoate + (6R)-5,10-methylene-5,6,7,8-tetrahydrofolate + H2O = 2-dehydropantoate + (6S)-5,6,7,8-tetrahydrofolate. The protein operates within cofactor biosynthesis; (R)-pantothenate biosynthesis; (R)-pantoate from 3-methyl-2-oxobutanoate: step 1/2. In terms of biological role, catalyzes the reversible reaction in which hydroxymethyl group from 5,10-methylenetetrahydrofolate is transferred onto alpha-ketoisovalerate to form ketopantoate. This Kosmotoga olearia (strain ATCC BAA-1733 / DSM 21960 / TBF 19.5.1) protein is 3-methyl-2-oxobutanoate hydroxymethyltransferase.